The following is a 677-amino-acid chain: Protein hook (677 aa).

One can recognise a Calponin-homology (CH) domain in the interval 6–123 (NEMYYSLLEW…RLLQLVLGCA (118 aa)). 2 coiled-coil regions span residues 135 to 436 (EIMC…KCGH) and 478 to 588 (QTAL…AKEV).

It belongs to the hook family. Homodimer. Interacts with microtubules via its N-terminus.

Its subcellular location is the cytoplasm. The protein localises to the cytoskeleton. The protein resides in the endosome. It localises to the synapse. Its function is as follows. Involved in endocytic trafficking by stabilizing organelles of the endocytic pathway. Probably acts as a cytoskeletal linker protein required to tether endosome vesicles to the cytoskeleton. Involved in modulation of endocytosis at stages required for down-regulation of membrane proteins that control synapse size. Not involved in synaptic vesicle recycling. Required in R7 cells for boss endocytosis into multivesicular bodies (MVBs). Has a role in regulating adult longevity. The chain is Protein hook from Drosophila persimilis (Fruit fly).